A 148-amino-acid chain; its full sequence is Oleosin 16 kDa (148 aa).

The tract at residues 1 to 21 (MADQHRGVIGGGGYGDRGGQE) is disordered. The residue at position 2 (alanine 2) is an N-acetylalanine. Residues 2-34 (ADQHRGVIGGGGYGDRGGQEQQEKQPFMMTALK) form a polar region. A compositionally biased stretch (gly residues) spans 8–17 (VIGGGGYGDR). A hydrophobic region spans residues 35–106 (TVTAATAGGS…AALSVFSWMY (72 aa)). Transmembrane regions (helical) follow at residues 43–63 (GSML…LTVA), 66–86 (VLVI…LMAA), and 87–107 (GFVT…WMYK).

The protein belongs to the oleosin family.

It is found in the lipid droplet. Its subcellular location is the membrane. Functionally, may have a structural role to stabilize the lipid body during desiccation of the seed by preventing coalescence of the oil. Probably interacts with both lipid and phospholipid moieties of lipid bodies. May also provide recognition signals for specific lipase anchorage in lipolysis during seedling growth. In Oryza sativa subsp. japonica (Rice), this protein is Oleosin 16 kDa (OLE16).